Reading from the N-terminus, the 91-residue chain is RNA-binding protein Hfq (91 aa).

The Sm domain occupies Asp9–Val69.

The protein belongs to the Hfq family. Homohexamer.

Its function is as follows. RNA chaperone that binds small regulatory RNA (sRNAs) and mRNAs to facilitate mRNA translational regulation in response to envelope stress, environmental stress and changes in metabolite concentrations. Also binds with high specificity to tRNAs. This Pseudothermotoga lettingae (strain ATCC BAA-301 / DSM 14385 / NBRC 107922 / TMO) (Thermotoga lettingae) protein is RNA-binding protein Hfq.